A 174-amino-acid chain; its full sequence is Interferon gamma (174 aa).

The N-terminal stretch at 1–23 (MHTTRCILALLLCLTQAMSGCYC) is a signal peptide. At Gln-24 the chain carries Pyrrolidone carboxylic acid. N-linked (GlcNAc...) asparagine glycans are attached at residues Asn-39 and Asn-106.

The protein belongs to the type II (or gamma) interferon family. Homodimer. Interacts with IFNGR1 (via extracellular domain); this interaction promotes IFNGR1 dimerization. Released primarily from activated T lymphocytes.

The protein resides in the secreted. In terms of biological role, type II interferon produced by immune cells such as T-cells and NK cells that plays crucial roles in antimicrobial, antiviral, and antitumor responses by activating effector immune cells and enhancing antigen presentation. Primarily signals through the JAK-STAT pathway after interaction with its receptor IFNGR1 to affect gene regulation. Upon IFNG binding, IFNGR1 intracellular domain opens out to allow association of downstream signaling components JAK2, JAK1 and STAT1, leading to STAT1 activation, nuclear translocation and transcription of IFNG-regulated genes. Many of the induced genes are transcription factors such as IRF1 that are able to further drive regulation of a next wave of transcription. Plays a role in class I antigen presentation pathway by inducing a replacement of catalytic proteasome subunits with immunoproteasome subunits. In turn, increases the quantity, quality, and repertoire of peptides for class I MHC loading. Increases the efficiency of peptide generation also by inducing the expression of activator PA28 that associates with the proteasome and alters its proteolytic cleavage preference. Up-regulates as well MHC II complexes on the cell surface by promoting expression of several key molecules such as cathepsins B/CTSB, H/CTSH, and L/CTSL. Participates in the regulation of hematopoietic stem cells during development and under homeostatic conditions by affecting their development, quiescence, and differentiation. The protein is Interferon gamma (IFNG) of Mesocricetus auratus (Golden hamster).